The following is a 597-amino-acid chain: tRNA uridine 5-carboxymethylaminomethyl modification enzyme MnmG (597 aa).

10 to 15 (GGGHAG) is an FAD binding site. Residue 267–281 (GPRYCPSIEDKVVRF) coordinates NAD(+).

It belongs to the MnmG family. In terms of assembly, homodimer. Heterotetramer of two MnmE and two MnmG subunits. FAD is required as a cofactor.

The protein resides in the cytoplasm. Its function is as follows. NAD-binding protein involved in the addition of a carboxymethylaminomethyl (cmnm) group at the wobble position (U34) of certain tRNAs, forming tRNA-cmnm(5)s(2)U34. This chain is tRNA uridine 5-carboxymethylaminomethyl modification enzyme MnmG, found in Thermus thermophilus (strain ATCC 27634 / DSM 579 / HB8).